The sequence spans 148 residues: Large ribosomal subunit protein uL22c (148 aa).

Belongs to the universal ribosomal protein uL22 family. In terms of assembly, part of the 50S ribosomal subunit.

It is found in the plastid. Its subcellular location is the chloroplast. Its function is as follows. This protein binds specifically to 23S rRNA. In terms of biological role, the globular domain of the protein is located near the polypeptide exit tunnel on the outside of the subunit, while an extended beta-hairpin is found that lines the wall of the exit tunnel in the center of the 70S ribosome. This is Large ribosomal subunit protein uL22c (rpl22) from Triticum aestivum (Wheat).